The sequence spans 274 residues: Large ribosomal subunit protein uL2cz/uL2cy (274 aa).

Residues 224-253 (NPIDHPHGGGEGRAPIGRKKPTTPWGYPAL) are disordered.

The protein belongs to the universal ribosomal protein uL2 family. As to quaternary structure, part of the 50S ribosomal subunit.

The protein resides in the plastid. This chain is Large ribosomal subunit protein uL2cz/uL2cy (rpl2-A), found in Epifagus virginiana (Beechdrops).